A 244-amino-acid polypeptide reads, in one-letter code: Ribonuclease PH (244 aa).

Phosphate is bound by residues arginine 90 and 128-130 (GTR).

This sequence belongs to the RNase PH family. Homohexameric ring arranged as a trimer of dimers.

It catalyses the reaction tRNA(n+1) + phosphate = tRNA(n) + a ribonucleoside 5'-diphosphate. Functionally, phosphorolytic 3'-5' exoribonuclease that plays an important role in tRNA 3'-end maturation. Removes nucleotide residues following the 3'-CCA terminus of tRNAs; can also add nucleotides to the ends of RNA molecules by using nucleoside diphosphates as substrates, but this may not be physiologically important. Probably plays a role in initiation of 16S rRNA degradation (leading to ribosome degradation) during starvation. The protein is Ribonuclease PH of Cutibacterium acnes (strain DSM 16379 / KPA171202) (Propionibacterium acnes).